Consider the following 1485-residue polypeptide: Putative E3 ubiquitin-protein ligase LIN-1 (1485 aa).

Residues 337–353 (EENEDDSDSELENESVD) are compositionally biased toward acidic residues. Disordered regions lie at residues 337 to 363 (EENE…IFSP) and 384 to 417 (NQIP…KRDS). In terms of domain architecture, U-box spans 510–585 (KPPKDFVCPI…TSWKEQNPEL (76 aa)). WD repeat units lie at residues 1204-1241 (SSNG…PRVI), 1246-1283 (EHTK…IKCI), 1409-1448 (SLST…RVAS), and 1454-1485 (GHTK…WALD).

As to expression, expressed in roots and nodules, and at very low levels in calli and seedling shoots.

It carries out the reaction S-ubiquitinyl-[E2 ubiquitin-conjugating enzyme]-L-cysteine + [acceptor protein]-L-lysine = [E2 ubiquitin-conjugating enzyme]-L-cysteine + N(6)-ubiquitinyl-[acceptor protein]-L-lysine.. The protein operates within protein modification; protein ubiquitination. Putative E3 ubiquitin-protein ligase involved in the rhizobial infection process. Plays an important role in the early steps of infection thread formation and in growth and differentiation of nodules. The protein is Putative E3 ubiquitin-protein ligase LIN-1 of Lotus japonicus (Lotus corniculatus var. japonicus).